A 196-amino-acid chain; its full sequence is Molybdopterin synthase catalytic subunit (196 aa).

Residues 1–29 are disordered; it reads MSTLPSTDPPPLPASTSSQQPAVHIPPPS. Residues 145–146, Lys-161, and 168–170 contribute to the substrate site; these read HR and KRE. Residues 174-196 are disordered; sequence GEPPGQGEWRANRDTDPEGKSTS. Over residues 183 to 196 the composition is skewed to basic and acidic residues; sequence RANRDTDPEGKSTS.

This sequence belongs to the MoaE family. MOCS2B subfamily. Heterotetramer; composed of 2 small (MOCS2A) and 2 large (MOCS2B) subunits.

The protein localises to the cytoplasm. It carries out the reaction 2 [molybdopterin-synthase sulfur-carrier protein]-C-terminal-Gly-aminoethanethioate + cyclic pyranopterin phosphate + H2O = molybdopterin + 2 [molybdopterin-synthase sulfur-carrier protein]-C-terminal Gly-Gly + 2 H(+). The protein operates within cofactor biosynthesis; molybdopterin biosynthesis. Its function is as follows. Catalytic subunit of the molybdopterin synthase complex, a complex that catalyzes the conversion of precursor Z into molybdopterin. Acts by mediating the incorporation of 2 sulfur atoms from thiocarboxylated MOCS2A into precursor Z to generate a dithiolene group. In Coccidioides immitis (strain RS) (Valley fever fungus), this protein is Molybdopterin synthase catalytic subunit.